The sequence spans 150 residues: Ribonuclease H (150 aa).

The region spanning 7–148 (ERPRVEIWTD…VDQLATRGRE (142 aa)) is the RNase H type-1 domain. 4 residues coordinate Mg(2+): D16, E54, D76, and D140.

The protein belongs to the RNase H family. Monomer. Mg(2+) is required as a cofactor.

The protein localises to the cytoplasm. It catalyses the reaction Endonucleolytic cleavage to 5'-phosphomonoester.. Its function is as follows. Endonuclease that specifically degrades the RNA of RNA-DNA hybrids. The polypeptide is Ribonuclease H (Gluconobacter oxydans (strain 621H) (Gluconobacter suboxydans)).